Consider the following 846-residue polypeptide: DNA mismatch repair protein MutS (846 aa).

610–617 (GPNMGGKS) is an ATP binding site.

This sequence belongs to the DNA mismatch repair MutS family.

This protein is involved in the repair of mismatches in DNA. It is possible that it carries out the mismatch recognition step. This protein has a weak ATPase activity. The polypeptide is DNA mismatch repair protein MutS (Legionella pneumophila (strain Lens)).